The following is a 333-amino-acid chain: Fe-S cluster assembly protein dre2 (333 aa).

Positions 1–29 (MSPITLDLTSDFNPANTTGAGSSSSQPRT) are disordered. Residues 7–28 (DLTSDFNPANTTGAGSSSSQPR) show a composition bias toward polar residues. Residues 23–158 (SSSQPRTLLV…KPDYAEEEAV (136 aa)) are N-terminal SAM-like domain. Positions 159 to 225 (PLRFGLKRKT…EDTLLTEADL (67 aa)) are linker. Cys235, Cys246, Cys249, and Cys251 together coordinate [2Fe-2S] cluster. The fe-S binding site A stretch occupies residues 235–251 (CQPKPGKKRRACKDCTC). [4Fe-4S] cluster-binding residues include Cys296, Cys299, Cys307, and Cys310. 2 short sequence motifs (cx2C motif) span residues 296 to 299 (CGSC) and 307 to 310 (CAGC). Residues 296-310 (CGSCALGDAFRCAGC) form a fe-S binding site B region.

Belongs to the anamorsin family. In terms of assembly, monomer. Interacts with tah18. Interacts with mia40. [2Fe-2S] cluster serves as cofactor. It depends on [4Fe-4S] cluster as a cofactor.

The protein resides in the cytoplasm. Its subcellular location is the mitochondrion intermembrane space. Its function is as follows. Component of the cytosolic iron-sulfur (Fe-S) protein assembly (CIA) machinery required for the maturation of extramitochondrial Fe-S proteins. Part of an electron transfer chain functioning in an early step of cytosolic Fe-S biogenesis, facilitating the de novo assembly of a [4Fe-4S] cluster on the scaffold complex cfd1-nbp35. Electrons are transferred to dre2 from NADPH via the FAD- and FMN-containing protein tah18. Tah18-dre2 are also required for the assembly of the diferric tyrosyl radical cofactor of ribonucleotide reductase (RNR), probably by providing electrons for reduction during radical cofactor maturation in the catalytic small subunit rnr2. The protein is Fe-S cluster assembly protein dre2 of Neurospora crassa (strain ATCC 24698 / 74-OR23-1A / CBS 708.71 / DSM 1257 / FGSC 987).